The sequence spans 354 residues: UDP-N-acetylglucosamine--N-acetylmuramyl-(pentapeptide) pyrophosphoryl-undecaprenol N-acetylglucosamine transferase (354 aa).

UDP-N-acetyl-alpha-D-glucosamine is bound by residues 11–13 (TGG), asparagine 117, arginine 160, serine 186, and glutamine 288.

It belongs to the glycosyltransferase 28 family. MurG subfamily.

It is found in the cell inner membrane. It carries out the reaction di-trans,octa-cis-undecaprenyl diphospho-N-acetyl-alpha-D-muramoyl-L-alanyl-D-glutamyl-meso-2,6-diaminopimeloyl-D-alanyl-D-alanine + UDP-N-acetyl-alpha-D-glucosamine = di-trans,octa-cis-undecaprenyl diphospho-[N-acetyl-alpha-D-glucosaminyl-(1-&gt;4)]-N-acetyl-alpha-D-muramoyl-L-alanyl-D-glutamyl-meso-2,6-diaminopimeloyl-D-alanyl-D-alanine + UDP + H(+). It participates in cell wall biogenesis; peptidoglycan biosynthesis. Functionally, cell wall formation. Catalyzes the transfer of a GlcNAc subunit on undecaprenyl-pyrophosphoryl-MurNAc-pentapeptide (lipid intermediate I) to form undecaprenyl-pyrophosphoryl-MurNAc-(pentapeptide)GlcNAc (lipid intermediate II). This is UDP-N-acetylglucosamine--N-acetylmuramyl-(pentapeptide) pyrophosphoryl-undecaprenol N-acetylglucosamine transferase from Rickettsia canadensis (strain McKiel).